Here is a 913-residue protein sequence, read N- to C-terminus: DNA mismatch repair protein MutS (913 aa).

ATP is bound at residue 720 to 727 (GPNASGKS).

Belongs to the DNA mismatch repair MutS family.

This protein is involved in the repair of mismatches in DNA. It is possible that it carries out the mismatch recognition step. This protein has a weak ATPase activity. This chain is DNA mismatch repair protein MutS, found in Prochlorococcus marinus (strain AS9601).